The following is a 112-amino-acid chain: UPF0342 protein SGO_1370 (112 aa).

The protein belongs to the UPF0342 family.

This chain is UPF0342 protein SGO_1370, found in Streptococcus gordonii (strain Challis / ATCC 35105 / BCRC 15272 / CH1 / DL1 / V288).